The following is a 238-amino-acid chain: NADH-quinone oxidoreductase subunit I (238 aa).

2 consecutive 4Fe-4S ferredoxin-type domains span residues 81–111 (LVPREDGRARCVACYMCATACPAQCIYIEAG) and 123–152 (VKFVIDELRCIVCGFCVEACPKDAIRMDSG). [4Fe-4S] cluster contacts are provided by C91, C94, C97, C101, C132, C135, C138, and C142.

It belongs to the complex I 23 kDa subunit family. In terms of assembly, NDH-1 is composed of 14 different subunits. Subunits NuoA, H, J, K, L, M, N constitute the membrane sector of the complex. Requires [4Fe-4S] cluster as cofactor.

It localises to the cell inner membrane. It carries out the reaction a quinone + NADH + 5 H(+)(in) = a quinol + NAD(+) + 4 H(+)(out). NDH-1 shuttles electrons from NADH, via FMN and iron-sulfur (Fe-S) centers, to quinones in the respiratory chain. The immediate electron acceptor for the enzyme in this species is believed to be ubiquinone. Couples the redox reaction to proton translocation (for every two electrons transferred, four hydrogen ions are translocated across the cytoplasmic membrane), and thus conserves the redox energy in a proton gradient. The protein is NADH-quinone oxidoreductase subunit I of Anaeromyxobacter sp. (strain Fw109-5).